The chain runs to 277 residues: Phosphatidylglycerol--prolipoprotein diacylglyceryl transferase (277 aa).

A run of 4 helical transmembrane segments spans residues 18 to 38 (IAIYWYAVLILLGVAVGYFMA), 54 to 74 (DLLVWALPISILSARAYYVIF), 91 to 111 (EGGIAIHGALIGAVVTAIVFA), and 115 to 135 (GLSFWKLADVAAPSILIGQAI). R137 serves as a coordination point for a 1,2-diacyl-sn-glycero-3-phospho-(1'-sn-glycerol). 3 consecutive transmembrane segments (helical) span residues 177 to 197 (QPTFLYESLWNVLGVVVLLLL), 205 to 225 (GELFLSYVIWYSVGRFVIEGM), and 236 to 256 (LRTAQLLSIILVVAAIALWVY).

It belongs to the Lgt family.

Its subcellular location is the cell membrane. It carries out the reaction L-cysteinyl-[prolipoprotein] + a 1,2-diacyl-sn-glycero-3-phospho-(1'-sn-glycerol) = an S-1,2-diacyl-sn-glyceryl-L-cysteinyl-[prolipoprotein] + sn-glycerol 1-phosphate + H(+). It functions in the pathway protein modification; lipoprotein biosynthesis (diacylglyceryl transfer). In terms of biological role, catalyzes the transfer of the diacylglyceryl group from phosphatidylglycerol to the sulfhydryl group of the N-terminal cysteine of a prolipoprotein, the first step in the formation of mature lipoproteins. The polypeptide is Phosphatidylglycerol--prolipoprotein diacylglyceryl transferase (Shouchella clausii (strain KSM-K16) (Alkalihalobacillus clausii)).